The sequence spans 399 residues: Telomeric repeat-binding factor 2-interacting protein 1 (399 aa).

Residues 1–21 are disordered; it reads MAEAMELGKDPNGPTHSSTLF. N-acetylalanine is present on Ala-2. One can recognise a BRCT domain in the interval 10 to 101; the sequence is DPNGPTHSST…EKLELEAYRL (92 aa). A phosphoserine mark is found at Ser-36 and Ser-43. Lys-114 participates in a covalent cross-link: Glycyl lysine isopeptide (Lys-Gly) (interchain with G-Cter in SUMO2). The region spanning 130–190 is the Myb-like domain; that stretch reads QSQAGRMVFT…SMKDRYLKRL (61 aa). Phosphoserine is present on residues Ser-156 and Ser-158. Lys-196 participates in a covalent cross-link: Glycyl lysine isopeptide (Lys-Gly) (interchain with G-Cter in SUMO2). 2 disordered regions span residues 199–245 and 279–309; these read LGEA…KEEI and TMCD…VSAP. Phosphoserine occurs at positions 205 and 208. Glycyl lysine isopeptide (Lys-Gly) (interchain with G-Cter in SUMO2) cross-links involve residues Lys-210, Lys-214, and Lys-242. The segment covering 281-304 has biased composition (acidic residues); it reads CDDDPCTPEEDSETQPDEEEEEEE. A Glycyl lysine isopeptide (Lys-Gly) (interchain with G-Cter in SUMO2) cross-link involves residue Lys-372. Positions 383 to 399 match the Nuclear localization signal motif; it reads KKFGAQNVARRIEFRKK.

It belongs to the RAP1 family. As to quaternary structure, associates with the I-kappa-B-kinase (IKK) core complex, composed of CHUK, IKBKB and IKBKG. Homodimer. Component of the shelterin complex (telosome) composed of TERF1, TERF2, TINF2, TERF2IP ACD and POT1. Interacts with TERF2 (but not TERF1) with its C-terminus. Interacts with SLX4/BTBD12. Interacts with TERF2; the interaction is direct.

It localises to the nucleus. Its subcellular location is the cytoplasm. The protein resides in the chromosome. It is found in the telomere. Functionally, acts both as a regulator of telomere function and as a transcription regulator. Involved in the regulation of telomere length and protection as a component of the shelterin complex (telosome). In contrast to other components of the shelterin complex, it is dispensible for telomere capping and does not participate in the protection of telomeres against non-homologous end-joining (NHEJ)-mediated repair. Instead, it is required to negatively regulate telomere recombination and is essential for repressing homology-directed repair (HDR), which can affect telomere length. Does not bind DNA directly: recruited to telomeric double-stranded 5'-TTAGGG-3' repeats via its interaction with TERF2. Independently of its function in telomeres, also acts as a transcription regulator: recruited to extratelomeric 5'-TTAGGG-3' sites via its association with TERF2 or other factors, and regulates gene expression. When cytoplasmic, associates with the I-kappa-B-kinase (IKK) complex and acts as a regulator of the NF-kappa-B signaling by promoting IKK-mediated phosphorylation of RELA/p65, leading to activate expression of NF-kappa-B target genes. The polypeptide is Telomeric repeat-binding factor 2-interacting protein 1 (TERF2IP) (Bos taurus (Bovine)).